A 214-amino-acid polypeptide reads, in one-letter code: Isochorismatase family protein 2B (214 aa).

Belongs to the isochorismatase family.

The chain is Isochorismatase family protein 2B from Dictyostelium discoideum (Social amoeba).